The sequence spans 89 residues: Small ribosomal subunit protein uS15 (89 aa).

This sequence belongs to the universal ribosomal protein uS15 family. As to quaternary structure, part of the 30S ribosomal subunit. Forms a bridge to the 50S subunit in the 70S ribosome, contacting the 23S rRNA.

Functionally, one of the primary rRNA binding proteins, it binds directly to 16S rRNA where it helps nucleate assembly of the platform of the 30S subunit by binding and bridging several RNA helices of the 16S rRNA. Its function is as follows. Forms an intersubunit bridge (bridge B4) with the 23S rRNA of the 50S subunit in the ribosome. This Bartonella quintana (strain Toulouse) (Rochalimaea quintana) protein is Small ribosomal subunit protein uS15.